Consider the following 372-residue polypeptide: Fatty acid 2-hydroxylase (372 aa).

Positions 8 to 86 (AASFTPAEVQ…LEQYYVGELR (79 aa)) constitute a Cytochrome b5 heme-binding domain. 2 residues coordinate heme: H43 and H69. The next 2 membrane-spanning stretches (helical) occupy residues 168–188 (VWYS…WSYY) and 213–233 (SVFI…EYVI). One can recognise a Fatty acid hydroxylase domain in the interval 219 to 361 (FVLGMLFWTF…TKLWDYFFHT (143 aa)). The Zn(2+) site is built by H234, H239, H257, H260, and H261. The next 2 membrane-spanning stretches (helical) occupy residues 268–288 (SRLV…YVFL) and 290–310 (LILP…GYVL). Zn(2+)-binding residues include H315, H319, H336, H339, and H340.

Belongs to the sterol desaturase family. SCS7 subfamily. The cofactor is Zn(2+). In terms of tissue distribution, expressed in brain (at protein level). Detected in cerebellum and forebrain. Expression in the white matter is mainly restricted in oligodendrocytes. Expressed in stomach, kidney, skin and testis. Expressed in sebaceous gland.

Its subcellular location is the endoplasmic reticulum membrane. The protein localises to the microsome membrane. It carries out the reaction a 1,2-saturated fatty acid + 2 Fe(II)-[cytochrome b5] + O2 + 2 H(+) = a (R)-2-hydroxy fatty acid + 2 Fe(III)-[cytochrome b5] + H2O. It catalyses the reaction hexadecanoate + 2 Fe(II)-[cytochrome b5] + O2 + 2 H(+) = (R)-2-hydroxyhexadecanoate + 2 Fe(III)-[cytochrome b5] + H2O. The enzyme catalyses octadecanoate + 2 Fe(II)-[cytochrome b5] + O2 + 2 H(+) = (R)-2-hydroxyoctadecanoate + 2 Fe(III)-[cytochrome b5] + H2O. The catalysed reaction is docosanoate + 2 Fe(II)-[cytochrome b5] + O2 + 2 H(+) = 2-hydroxydocosanoate + 2 Fe(III)-[cytochrome b5] + H2O. It carries out the reaction tetracosanoate + 2 Fe(II)-[cytochrome b5] + O2 + 2 H(+) = (R)-2-hydroxytetracosanoate + 2 Fe(III)-[cytochrome b5] + H2O. Its pathway is sphingolipid metabolism; galactosylceramide biosynthesis. The protein operates within lipid metabolism; fatty acid metabolism. Its function is as follows. Catalyzes the hydroxylation of free fatty acids at the C-2 position to produce 2-hydroxy fatty acids, which are building blocks of sphingolipids and glycosphingolipids common in neural tissue and epidermis. FA2H is stereospecific for the production of (R)-2-hydroxy fatty acids. Plays an essential role in the synthesis of galactosphingolipids of the myelin sheath. Responsible for the synthesis of sphingolipids and glycosphingolipids involved in the formation of epidermal lamellar bodies critical for skin permeability barrier. Participates in the synthesis of glycosphingolipids and a fraction of type II wax diesters in sebaceous gland, specifically regulating hair follicle homeostasis. Involved in the synthesis of sphingolipids of plasma membrane rafts, controlling lipid raft mobility and trafficking of raft-associated proteins. The polypeptide is Fatty acid 2-hydroxylase (Mus musculus (Mouse)).